The following is a 228-amino-acid chain: Cytochrome c oxidase subunit 2 (228 aa).

The Mitochondrial intermembrane portion of the chain corresponds to M1–H26. A helical membrane pass occupies residues A27–L47. Residues N48–T60 are Mitochondrial matrix-facing. The chain crosses the membrane as a helical span at residues V61–L81. The Mitochondrial intermembrane portion of the chain corresponds to R82–P228. Residues H161, C196, E198, C200, H204, and M207 each coordinate Cu cation. E198 serves as a coordination point for Mg(2+).

Belongs to the cytochrome c oxidase subunit 2 family. Component of the cytochrome c oxidase (complex IV, CIV), a multisubunit enzyme composed of a catalytic core of 3 subunits and several supernumerary subunits. The complex exists as a monomer or a dimer and forms supercomplexes (SCs) in the inner mitochondrial membrane with ubiquinol-cytochrome c oxidoreductase (cytochrome b-c1 complex, complex III, CIII). Cu cation is required as a cofactor.

The protein resides in the mitochondrion inner membrane. It carries out the reaction 4 Fe(II)-[cytochrome c] + O2 + 8 H(+)(in) = 4 Fe(III)-[cytochrome c] + 2 H2O + 4 H(+)(out). Functionally, component of the cytochrome c oxidase, the last enzyme in the mitochondrial electron transport chain which drives oxidative phosphorylation. The respiratory chain contains 3 multisubunit complexes succinate dehydrogenase (complex II, CII), ubiquinol-cytochrome c oxidoreductase (cytochrome b-c1 complex, complex III, CIII) and cytochrome c oxidase (complex IV, CIV), that cooperate to transfer electrons derived from NADH and succinate to molecular oxygen, creating an electrochemical gradient over the inner membrane that drives transmembrane transport and the ATP synthase. Cytochrome c oxidase is the component of the respiratory chain that catalyzes the reduction of oxygen to water. Electrons originating from reduced cytochrome c in the intermembrane space (IMS) are transferred via the dinuclear copper A center (CU(A)) of subunit 2 and heme A of subunit 1 to the active site in subunit 1, a binuclear center (BNC) formed by heme A3 and copper B (CU(B)). The BNC reduces molecular oxygen to 2 water molecules using 4 electrons from cytochrome c in the IMS and 4 protons from the mitochondrial matrix. This Lumbricus terrestris (Common earthworm) protein is Cytochrome c oxidase subunit 2 (COII).